Reading from the N-terminus, the 156-residue chain is Small ribosomal subunit protein uS7 (156 aa).

It belongs to the universal ribosomal protein uS7 family. In terms of assembly, part of the 30S ribosomal subunit. Contacts proteins S9 and S11.

One of the primary rRNA binding proteins, it binds directly to 16S rRNA where it nucleates assembly of the head domain of the 30S subunit. Is located at the subunit interface close to the decoding center, probably blocks exit of the E-site tRNA. The polypeptide is Small ribosomal subunit protein uS7 (Chelativorans sp. (strain BNC1)).